The primary structure comprises 115 residues: MDKRDLYDSFGEMEQQMQQMLDKMAKLRADMTTVLEKNAELVIENEHLREHMVEIENELPKKAASTTTLSKSRQNLEKLYDEGFHVCNQFYGKRRDDDESCVFCLEVIYGERERA.

Residues His-85, Cys-87, Cys-101, and Cys-104 each coordinate Zn(2+).

Belongs to the YabA family. As to quaternary structure, homotetramer. Interacts with both DnaA and DnaN, acting as a bridge between these two proteins. It depends on Zn(2+) as a cofactor.

It localises to the cytoplasm. The protein resides in the nucleoid. In terms of biological role, involved in control of chromosome replication initiation. Inhibits the cooperative binding of DnaA to the oriC region, thus negatively regulating initiation of chromosome replication. Inhibits the ability of DnaA-ATP to form a helix on DNA; does not disassemble preformed DnaA-DNA helices. Decreases the residence time of DnaA on the chromosome at its binding sites (oriC, replication forks and promoter-binding sites). Tethers DnaA to the replication machinery via the DNA polymerase beta sliding clamp subunit (dnaN). Associates with oriC and other DnaA targets on the chromosome in a DnaA-dependent manner. The sequence is that of Replication initiation control protein YabA from Lactiplantibacillus plantarum (strain ATCC BAA-793 / NCIMB 8826 / WCFS1) (Lactobacillus plantarum).